The following is a 316-amino-acid chain: Pentatricopeptide repeat-containing protein At1g19525 (316 aa).

PPR repeat units lie at residues 9 to 43 (DILTATALVHMYSKSGNFERATEAFENLKSYGLRP), 44 to 78 (DEKIYEAMILGYVNAGKPKLGERLMKEMQAKELKA), 79 to 113 (SEEVYMALLRAYAQMGDANGAAGISSSMQYASDGP), 115 to 149 (SFEAYSLFVEAYGKAGQVDKAKSNFDEMRKLGHKP), 150 to 184 (DDKCIANLVRAYKGENSLDKALRLLLQLEKDGIEI), and 185 to 219 (GVITYTVLVDWMANLGLIEEAEQLLVKISQLGEAP).

The protein belongs to the PPR family. P subfamily.

The chain is Pentatricopeptide repeat-containing protein At1g19525 from Arabidopsis thaliana (Mouse-ear cress).